Here is a 202-residue protein sequence, read N- to C-terminus: Imidazoleglycerol-phosphate dehydratase (202 aa).

The protein belongs to the imidazoleglycerol-phosphate dehydratase family.

Its subcellular location is the cytoplasm. The catalysed reaction is D-erythro-1-(imidazol-4-yl)glycerol 3-phosphate = 3-(imidazol-4-yl)-2-oxopropyl phosphate + H2O. It participates in amino-acid biosynthesis; L-histidine biosynthesis; L-histidine from 5-phospho-alpha-D-ribose 1-diphosphate: step 6/9. The sequence is that of Imidazoleglycerol-phosphate dehydratase from Brucella abortus (strain S19).